A 387-amino-acid chain; its full sequence is MDLFEYQAKGLFAKHNVPTTPGRVTDTAEGARAIATEIGHPVMVKAQVKIGGRGKAGGVKYAATPDDAYEHANNILGLDIKGHVVKKLLVAEASDIAEEYYISFLLDRANRTYLAMCSVEGGMEIEEVAATKPDRLAKVPVDAAKGVDLAFARSIAEQGHLPAEVLDAAAVTISKLWDLFVGEDATLVEVNPLVRTPDDQILALDGKVTLDANADFRHPDHVEFEDRAATDPLELKAKEHDLNYVKLDGQVGIIGNGAGLVMSTLDVVAYAGEKHGGVKPANFLDIGGGASAEVMAAGLDVVLGDSQVKSVFVNVFGGITSCDAVATGIVKALEILGAEANKPLVVRLDGNNVEEGRRILTDANHPLVTLVPTMDEAADKAAELASA.

In terms of domain architecture, ATP-grasp spans 9 to 236 (KGLFAKHNVP…RAATDPLELK (228 aa)). ATP contacts are provided by residues lysine 45, 52–54 (GRG), serine 94, and glutamate 99. The Mg(2+) site is built by asparagine 191 and aspartate 205. Residues asparagine 256 and 318-320 (GIT) contribute to the substrate site.

It belongs to the succinate/malate CoA ligase beta subunit family. As to quaternary structure, heterotetramer of two alpha and two beta subunits. Mg(2+) is required as a cofactor.

The enzyme catalyses succinate + ATP + CoA = succinyl-CoA + ADP + phosphate. It catalyses the reaction GTP + succinate + CoA = succinyl-CoA + GDP + phosphate. It participates in carbohydrate metabolism; tricarboxylic acid cycle; succinate from succinyl-CoA (ligase route): step 1/1. Functionally, succinyl-CoA synthetase functions in the citric acid cycle (TCA), coupling the hydrolysis of succinyl-CoA to the synthesis of either ATP or GTP and thus represents the only step of substrate-level phosphorylation in the TCA. The beta subunit provides nucleotide specificity of the enzyme and binds the substrate succinate, while the binding sites for coenzyme A and phosphate are found in the alpha subunit. The chain is Succinate--CoA ligase [ADP-forming] subunit beta from Mycobacterium ulcerans (strain Agy99).